We begin with the raw amino-acid sequence, 124 residues long: UPF0102 protein PP_1324 (124 aa).

It belongs to the UPF0102 family.

The chain is UPF0102 protein PP_1324 from Pseudomonas putida (strain ATCC 47054 / DSM 6125 / CFBP 8728 / NCIMB 11950 / KT2440).